The following is a 215-amino-acid chain: MDDHLKLGDSGVVKNVARLGRRGQRARQAAEQTSLEEPRHVRKSSSSTSMGEGPPPKPARRQGGWAEETSGSAKSGRRPAMVQDVEDRRLRPQTPQGSDGEGDIPVIPDLDEVQEEDLNMQVAAPPSIQVNRVMTYRDLDNDLMKYSAFRTLDGEIDLKLLTKVLAPEQEVREEDVGWDWDHLFTEVSSELLTEWDQGEKEEQVCVMRTSLPKMG.

The interval 1-107 (MDDHLKLGDS…SDGEGDIPVI (107 aa)) is disordered.

Belongs to the IFT43 family. In terms of assembly, component of IFT complex A.

Functionally, component of IFT complex A (IFT-A) involved in retrograde ciliary transport along microtubules from the ciliary tip to the base. In Salmo salar (Atlantic salmon), this protein is Intraflagellar transport protein 43 homolog B (ift43b).